We begin with the raw amino-acid sequence, 213 residues long: Uridine kinase (213 aa).

ATP is bound at residue 15 to 22 (GASASGKS).

This sequence belongs to the uridine kinase family.

The protein localises to the cytoplasm. It carries out the reaction uridine + ATP = UMP + ADP + H(+). The enzyme catalyses cytidine + ATP = CMP + ADP + H(+). Its pathway is pyrimidine metabolism; CTP biosynthesis via salvage pathway; CTP from cytidine: step 1/3. It functions in the pathway pyrimidine metabolism; UMP biosynthesis via salvage pathway; UMP from uridine: step 1/1. This Salmonella newport (strain SL254) protein is Uridine kinase.